A 310-amino-acid polypeptide reads, in one-letter code: Putative sugar kinase PH1459 (310 aa).

Lys-194, Thr-219, and Gly-224 together coordinate ATP.

The protein belongs to the carbohydrate kinase PfkB family.

The chain is Putative sugar kinase PH1459 from Pyrococcus horikoshii (strain ATCC 700860 / DSM 12428 / JCM 9974 / NBRC 100139 / OT-3).